The following is a 429-amino-acid chain: 3-isopropylmalate dehydratase large subunit (429 aa).

Residues C303, C363, and C366 each coordinate [4Fe-4S] cluster.

The protein belongs to the aconitase/IPM isomerase family. LeuC type 2 subfamily. In terms of assembly, heterodimer of LeuC and LeuD. [4Fe-4S] cluster is required as a cofactor.

The enzyme catalyses (2R,3S)-3-isopropylmalate = (2S)-2-isopropylmalate. Its pathway is amino-acid biosynthesis; L-leucine biosynthesis; L-leucine from 3-methyl-2-oxobutanoate: step 2/4. Catalyzes the isomerization between 2-isopropylmalate and 3-isopropylmalate, via the formation of 2-isopropylmaleate. This Caldicellulosiruptor bescii (strain ATCC BAA-1888 / DSM 6725 / KCTC 15123 / Z-1320) (Anaerocellum thermophilum) protein is 3-isopropylmalate dehydratase large subunit.